Consider the following 319-residue polypeptide: Probable cell division protein WhiA (319 aa).

A DNA-binding region (H-T-H motif) is located at residues 277 to 310 (SLEELGKLAEPAMTKDAIAGRIRRLLCLADKRAK).

This sequence belongs to the WhiA family.

Its function is as follows. Involved in cell division and chromosome segregation. In Tropheryma whipplei (strain Twist) (Whipple's bacillus), this protein is Probable cell division protein WhiA.